The primary structure comprises 360 residues: Peptide chain release factor 1 (360 aa).

Gln-237 is subject to N5-methylglutamine.

Belongs to the prokaryotic/mitochondrial release factor family. Methylated by PrmC. Methylation increases the termination efficiency of RF1.

It localises to the cytoplasm. Peptide chain release factor 1 directs the termination of translation in response to the peptide chain termination codons UAG and UAA. The sequence is that of Peptide chain release factor 1 from Pseudomonas aeruginosa (strain LESB58).